Reading from the N-terminus, the 75-residue chain is Alpha-elapitoxin-Bc2a (75 aa).

Residues 1–2 (YT) form the signal peptide. Cystine bridges form between Cys5-Cys24, Cys17-Cys45, Cys30-Cys34, Cys49-Cys60, and Cys61-Cys66.

It belongs to the three-finger toxin family. Long-chain subfamily. Type II alpha-neurotoxin sub-subfamily. Monomer in solution, homodimer in crystal state. In terms of tissue distribution, expressed by the venom gland.

It is found in the secreted. Binds to muscular and neuronal nicotinic acetylcholine receptor (nAChR) and inhibits acetylcholine from binding to the receptor, thereby impairing neuromuscular and neuronal transmission. Reversibly blocks chick and mouse muscle nicotinic acetylcholine receptors. Blocks muscle type nAChR with an IC(50)=30 nM, when heterologously expressed in oocytes. Also binds with high affinity to alpha-7/CHRNA7 nAChRs. In addition, shows a weak inhibition of neuronal alpha-3-beta-2/CHRNA3-CHRNB2 nAChR (IC(50)=2.9 uM). Selectively binds to alpha-1-delta subunit interface of the mouse muscle nicotinic acetylcholine receptor, with a 10-fold higher affinity for the adult than for the fetal receptors. In vivo, when intraperitoneally injected into mice, causes flaccid paralysis and respiratory distress, followed by death within 2-4 hours. In Bungarus candidus (Malayan krait), this protein is Alpha-elapitoxin-Bc2a.